A 276-amino-acid chain; its full sequence is Glutamate 5-kinase (276 aa).

Lys14 lines the ATP pocket. Residues Ser54, Asp141, and Asn157 each coordinate substrate. ATP-binding positions include 177–178 and 219–225; these read SD and TGGMLTK.

This sequence belongs to the glutamate 5-kinase family.

The protein localises to the cytoplasm. The catalysed reaction is L-glutamate + ATP = L-glutamyl 5-phosphate + ADP. It participates in amino-acid biosynthesis; L-proline biosynthesis; L-glutamate 5-semialdehyde from L-glutamate: step 1/2. Functionally, catalyzes the transfer of a phosphate group to glutamate to form L-glutamate 5-phosphate. In Listeria innocua serovar 6a (strain ATCC BAA-680 / CLIP 11262), this protein is Glutamate 5-kinase.